The following is a 193-amino-acid chain: Potassium-transporting ATPase KdpC subunit (193 aa).

A helical membrane pass occupies residues 14–34 (ITFTFLVLCGLVYPLIVTGIA).

Belongs to the KdpC family. As to quaternary structure, the system is composed of three essential subunits: KdpA, KdpB and KdpC.

Its subcellular location is the cell membrane. Its function is as follows. Part of the high-affinity ATP-driven potassium transport (or Kdp) system, which catalyzes the hydrolysis of ATP coupled with the electrogenic transport of potassium into the cytoplasm. This subunit acts as a catalytic chaperone that increases the ATP-binding affinity of the ATP-hydrolyzing subunit KdpB by the formation of a transient KdpB/KdpC/ATP ternary complex. The protein is Potassium-transporting ATPase KdpC subunit of Bacillus cereus (strain G9842).